Consider the following 96-residue polypeptide: UPF0235 protein VCM66_0443 (96 aa).

The protein belongs to the UPF0235 family.

The polypeptide is UPF0235 protein VCM66_0443 (Vibrio cholerae serotype O1 (strain M66-2)).